The following is a 50-amino-acid chain: Light-harvesting protein B-870 beta chain (50 aa).

At 2-22 the chain is on the cytoplasmic side; that stretch reads ADNTDLSFTGLTDEQAQELHS. 2 residues coordinate a bacteriochlorophyll: His-21 and His-39. The chain crosses the membrane as a helical span at residues 23–45; sequence VYMSGLFLFAAVAVVAHLATYIW. Residues 46–50 lie on the Periplasmic side of the membrane; that stretch reads RPWFG.

The protein belongs to the antenna complex beta subunit family. As to quaternary structure, the core complex is formed by different alpha and beta chains, binding bacteriochlorophyll molecules, and arranged most probably in tetrameric structures disposed around the reaction center. The non-pigmented gamma chains may constitute additional components.

The protein localises to the cell inner membrane. Functionally, antenna complexes are light-harvesting systems, which transfer the excitation energy to the reaction centers. The protein is Light-harvesting protein B-870 beta chain (pufB) of Roseobacter denitrificans (strain ATCC 33942 / OCh 114) (Erythrobacter sp. (strain OCh 114)).